Here is a 519-residue protein sequence, read N- to C-terminus: MADDGSASNRRDPIKSSVGNVAGQRRRKQAVTVAKERRELLVRAKRLCRVGTNGDVEDALVENEMMVDEEQPILEAQASKSVEELKSAVQYQGKGAMQKRVTALRELRRLLSKSEFPPVEAALRAGAIPLLVQCLSFGSPDEQLLESAWCLTNIAAGKPEETKALLPALPLLIAHLGEKSSAPVAEQCAWAIGNVAGEGEDLRNVLLSQGALPPLARMIFPDKGSTVRTAAWALSNLIKGPESKAAAQLVKIDGILDAILRHLKKTDEETATEIAWIIVYLSALSDIATSMLLKGGILQLLIDRLATSSSLQLLIPVLRSLGNFVAVDPKAVLTILIREQNTEESIIGVLAKCLRSEHRVLKKEAAWVLSNIAAGSIEHKRMIHSTEVMPLLLRILSTSPFDIRKEVAYVLGNLCVESAEGDRKPRIIQEHLVSIVSGGCLRGFIELVRSPDIEAARLGLQFIELVLRGMPNGEGPKLVEGEDGIDAMERFQFHENEELRVMANSLVDKYFGEDYGIDE.

Residues Met1 to Gln29 are disordered. ARM repeat units follow at residues Phe116–Ala156, Lys158–Gly197, Glu200–Lys239, Lys244–Ala283, Asp286–Ala326, Ile335–Ala374, Ile377–Val416, and Gln429–Arg468.

It belongs to the importin alpha family. As to quaternary structure, forms a complex with importin subunit beta-1.

It localises to the nucleus envelope. Its function is as follows. Binds to conventional NLS motifs and mediates nuclear protein import across the nuclear envelope. Acts as a cellular receptor for the nuclear import of the virD2 protein of Agrobacterium, but is not essential for Agrobacterium-mediated root transformation. The polypeptide is Importin subunit alpha-9 (Arabidopsis thaliana (Mouse-ear cress)).